Reading from the N-terminus, the 66-residue chain is Large ribosomal subunit protein bL31 (66 aa).

Zn(2+)-binding residues include cysteine 16, cysteine 18, cysteine 36, and cysteine 39.

The protein belongs to the bacterial ribosomal protein bL31 family. Type A subfamily. In terms of assembly, part of the 50S ribosomal subunit. It depends on Zn(2+) as a cofactor.

Binds the 23S rRNA. The protein is Large ribosomal subunit protein bL31 of Geobacillus kaustophilus (strain HTA426).